Reading from the N-terminus, the 346-residue chain is Porphobilinogen deaminase (346 aa).

The residue at position 242 (Cys-242) is an S-(dipyrrolylmethanemethyl)cysteine. The segment at 317 to 346 (ATEPGARSGTGAVRPPETDLSNPSPMENPQ) is disordered. A compositionally biased stretch (polar residues) spans 335–346 (DLSNPSPMENPQ).

This sequence belongs to the HMBS family. In terms of assembly, monomer. Dipyrromethane serves as cofactor.

The catalysed reaction is 4 porphobilinogen + H2O = hydroxymethylbilane + 4 NH4(+). Its pathway is porphyrin-containing compound metabolism; protoporphyrin-IX biosynthesis; coproporphyrinogen-III from 5-aminolevulinate: step 2/4. Its function is as follows. Tetrapolymerization of the monopyrrole PBG into the hydroxymethylbilane pre-uroporphyrinogen in several discrete steps. The protein is Porphobilinogen deaminase of Nocardia farcinica (strain IFM 10152).